Reading from the N-terminus, the 252-residue chain is Methionine aminopeptidase (252 aa).

Histidine 76 contributes to the substrate binding site. Positions 93, 104, and 168 each coordinate a divalent metal cation. Histidine 175 serves as a coordination point for substrate. A divalent metal cation is bound by residues glutamate 202 and glutamate 233.

It belongs to the peptidase M24A family. Methionine aminopeptidase type 1 subfamily. As to quaternary structure, monomer. Co(2+) is required as a cofactor. Requires Zn(2+) as cofactor. Mn(2+) serves as cofactor. It depends on Fe(2+) as a cofactor.

The catalysed reaction is Release of N-terminal amino acids, preferentially methionine, from peptides and arylamides.. Its function is as follows. Removes the N-terminal methionine from nascent proteins. The N-terminal methionine is often cleaved when the second residue in the primary sequence is small and uncharged (Met-Ala-, Cys, Gly, Pro, Ser, Thr, or Val). Requires deformylation of the N(alpha)-formylated initiator methionine before it can be hydrolyzed. In Staphylococcus aureus (strain MRSA252), this protein is Methionine aminopeptidase.